A 442-amino-acid polypeptide reads, in one-letter code: D-serine dehydratase (442 aa).

Lys118 is modified (N6-(pyridoxal phosphate)lysine).

The protein belongs to the serine/threonine dehydratase family. DsdA subfamily. As to quaternary structure, monomer. The cofactor is pyridoxal 5'-phosphate.

It catalyses the reaction D-serine = pyruvate + NH4(+). The polypeptide is D-serine dehydratase (Shigella sonnei (strain Ss046)).